Here is a 160-residue protein sequence, read N- to C-terminus: Small ribosomal subunit protein uS9 (160 aa).

Over residues 1 to 18 (MTDTSNSLQDLGTLTGAP) the composition is skewed to polar residues. Positions 1-37 (MTDTSNSLQDLGTLTGAPSAQPVKSVEPKIDAQGRAY) are disordered.

This sequence belongs to the universal ribosomal protein uS9 family.

The polypeptide is Small ribosomal subunit protein uS9 (Hyphomonas neptunium (strain ATCC 15444)).